A 314-amino-acid chain; its full sequence is Inositol oxygenase 5 (314 aa).

Substrate is bound by residues Arg54 and 112 to 114 (DES). Fe cation-binding residues include His125, His150, and Asp151. Substrate is bound by residues Lys154 and 171–172 (GD). Positions 223, 249, and 282 each coordinate Fe cation. 249 to 250 (HS) is a binding site for substrate.

It belongs to the myo-inositol oxygenase family. Requires Fe cation as cofactor. As to expression, expressed in flowers and siliques.

Its subcellular location is the cytoplasm. It catalyses the reaction myo-inositol + O2 = D-glucuronate + H2O + H(+). The protein operates within polyol metabolism; myo-inositol degradation into D-glucuronate; D-glucuronate from myo-inositol: step 1/1. In terms of biological role, involved in the biosynthesis of UDP-glucuronic acid (UDP-GlcA), providing nucleotide sugars for cell-wall polymers. May be also involved in plant ascorbate biosynthesis. This is Inositol oxygenase 5 (MIOX5) from Arabidopsis thaliana (Mouse-ear cress).